The sequence spans 334 residues: MGKDFYKILGLERKASDDEIKKAYRKLALKYHPDKNKSPQAEERFKEIAEAYEVLSDKKKRDIFDNYGEDGLKGGQPGPDGGGQPGAYTYQFHGDPRATFAQFFGSSDPFGAFFTGGDNMFSGGQGGNTNEIFWNIGGDDMFAFNAQAPSRKRQQDPPIEHDLFVSLEEVDKGCIKKMKISRMATGSNGPYKEEKVLRITVKPGWKAGTKITFPQEGDSAPNKTPADIVFIIRDKPHSLFKREGIDLKYTAQISLKQALCGALVSVPTLQGSRIQVNPNHEIIKPTTTRRINGLGLPVPKEPSRRGDLIVSFDIKFPDTLAPSLQNQLSELLPN.

The 65-residue stretch at 4–68 folds into the J domain; sequence DFYKILGLER…KKRDIFDNYG (65 aa). At serine 187 the chain carries Phosphoserine.

The protein resides in the cytoplasm. The protein is DnaJ protein homolog 1 (DnaJ-1) of Drosophila melanogaster (Fruit fly).